The following is a 273-amino-acid chain: Holocytochrome c-type synthase (273 aa).

Residues 1-18 are compositionally biased toward low complexity; sequence MGLSASSPAATAQSAAEP. Positions 1–39 are disordered; it reads MGLSASSPAATAQSAAEPSKQHQVASPPSECPMHQEKMR. HRM repeat units follow at residues 30 to 35 and 40 to 45; these read ECPMHQ and GCPMHM.

The protein belongs to the cytochrome c-type heme lyase family.

The protein localises to the mitochondrion inner membrane. The enzyme catalyses holo-[cytochrome c] = apo-[cytochrome c] + heme b. Its function is as follows. Lyase that catalyzes the covalent linking of the heme group to the cytochrome C apoprotein to produce the mature functional cytochrome. In Gallus gallus (Chicken), this protein is Holocytochrome c-type synthase (HCCS).